A 312-amino-acid chain; its full sequence is Zinc finger protein 414 (312 aa).

The disordered stretch occupies residues 1-110 (MEEKPSGPIP…RRPPPGKQIP (110 aa)). The span at 29-48 (SPAVPAAAPSSSMSEEPGPE) shows a compositional bias: low complexity. Polar residues predominate over residues 84 to 93 (GLTSIVSGTS). C2H2-type zinc fingers lie at residues 109-133 (IPCS…LRTH), 145-169 (FRCS…SKLH), and 176-201 (FKCE…CAEH). The segment at 203–312 (QSPAPPPPPA…GSDAPSGACR (110 aa)) is disordered. The segment covering 213-225 (LDREPPAPERPPE) has biased composition (basic and acidic residues). Low complexity-rich tracts occupy residues 227 to 243 (DPAS…EPFT) and 265 to 285 (SPPR…SSAA).

The protein belongs to the krueppel C2H2-type zinc-finger protein family.

Its subcellular location is the nucleus. Its function is as follows. May be involved in transcriptional regulation. This Homo sapiens (Human) protein is Zinc finger protein 414 (ZNF414).